A 154-amino-acid polypeptide reads, in one-letter code: Myoglobin (154 aa).

One can recognise a Globin domain in the interval glycine 2–lysine 148. A Phosphoserine modification is found at serine 4. Histidine 65 contributes to the nitrite binding site. Histidine 65 contacts O2. Threonine 68 carries the post-translational modification Phosphothreonine. Residue histidine 94 participates in heme b binding.

The protein belongs to the globin family. Monomeric.

It is found in the cytoplasm. Its subcellular location is the sarcoplasm. The catalysed reaction is Fe(III)-heme b-[protein] + nitric oxide + H2O = Fe(II)-heme b-[protein] + nitrite + 2 H(+). The enzyme catalyses H2O2 + AH2 = A + 2 H2O. Functionally, monomeric heme protein which primary function is to store oxygen and facilitate its diffusion within muscle tissues. Reversibly binds oxygen through a pentacoordinated heme iron and enables its timely and efficient release as needed during periods of heightened demand. Depending on the oxidative conditions of tissues and cells, and in addition to its ability to bind oxygen, it also has a nitrite reductase activity whereby it regulates the production of bioactive nitric oxide. Under stress conditions, like hypoxia and anoxia, it also protects cells against reactive oxygen species thanks to its pseudoperoxidase activity. This Tupaia glis (Common tree shrew) protein is Myoglobin (MB).